The sequence spans 451 residues: MVSLQQLTISILLLFTASVQSLDINVDDKDSICSAAKYVVQGIWNYYEGLKYGGTVGMFAPPNYWWNAGEAFGGLVDFYTYCQSDNSTLEKLIYNGMYHQAGENYNYIPSNQSMTEGNDDQGVWGMAIMEAVERNFTEPESHSWLEMVQAVFNTMNARWDADNCGGGLRWQIFTWNSGYDYKNSISNGCLFHLAARLARYTGNSSVYVDTAEKVWKWMEDVGFLTEEDNGDVRIYDGAKITNNCSSVTDLRWSYTYGVFMAGCAYLYNFTGDDVWLTRTNEIVQASLSYFFANKIMQETTCQPQNKCNNDQRSFRCLFSRCLGLTTQLAPETKDRIREVLEASAEGAAKSCSGGSDGVTCGENWAIDKWDGVYGLGEQTSALEVMMALIVEPPLSVKTGGTNRTDYSAGTNSEDNANKNELTITGKDKAGAGVLTAIVLAVILGGAIWMIF.

Residues 1–21 form the signal peptide; it reads MVSLQQLTISILLLFTASVQS. Residues Asn-86, Asn-111, Asn-135, Asn-203, Asn-243, Asn-268, and Asn-402 are each glycosylated (N-linked (GlcNAc...) asparagine). Residue Ala-429 is the site of GPI-anchor amidated alanine attachment. Residues 430 to 451 constitute a propeptide, removed in mature form; that stretch reads GAGVLTAIVLAVILGGAIWMIF.

It belongs to the glycosyl hydrolase 76 family. Post-translationally, the GPI-anchor is attached to the protein in the endoplasmic reticulum and serves to target the protein to the cell surface. There, the glucosamine-inositol phospholipid moiety is cleaved off and the GPI-modified mannoprotein is covalently attached via its lipidless GPI glycan remnant to the 1,6-beta-glucan of the outer cell wall layer. In terms of processing, N-mannosylated.

It localises to the secreted. Its subcellular location is the cell wall. It is found in the cell membrane. It carries out the reaction Random hydrolysis of (1-&gt;6)-alpha-D-mannosidic linkages in unbranched (1-&gt;6)-mannans.. Required for normal synthesis of the cell wall and alkaline pH-induced hypha formation. The polypeptide is Mannan endo-1,6-alpha-mannosidase DFG5 (DFG5) (Candida albicans (strain SC5314 / ATCC MYA-2876) (Yeast)).